Reading from the N-terminus, the 456-residue chain is Cysteine--tRNA ligase (456 aa).

Cys-28 contacts Zn(2+). The 'HIGH' region motif lies at 30-40 (ITVYDHCHLGH). Zn(2+)-binding residues include Cys-209, His-234, and Glu-238. A 'KMSKS' region motif is present at residues 266–270 (KMAKS). Lys-269 is a binding site for ATP.

This sequence belongs to the class-I aminoacyl-tRNA synthetase family. As to quaternary structure, monomer. Zn(2+) is required as a cofactor.

It localises to the cytoplasm. The enzyme catalyses tRNA(Cys) + L-cysteine + ATP = L-cysteinyl-tRNA(Cys) + AMP + diphosphate. The protein is Cysteine--tRNA ligase of Legionella pneumophila (strain Paris).